Here is a 334-residue protein sequence, read N- to C-terminus: MSGFYHKHFLKLLDFTPAELNSLLQLAAKLKADKKSGKEEAKLTGKNIALIFEKDSTRTRCSFEVAAYDQGARVTYLGPSGSQIGHKESIKDTARVLGRMYDGIQYRGYGQEIVETLAEYAGVPVWNGLTNEFHPTQLLADLLTMQEHLPGKTFNEMTLVYAGDARNNMGNSMLEAAALTGLDLRLVAPQACWPEAALVTECRALAQQNGGNITLTEDVAKGVEGADFIYTDVWVSMGEAKEKWAERIALLRDYQVNSKMMQLTGNPEVKFLHCLPAFHDDQTTLGKKMAEEFGLHGGMEVTDEVFESAASIVFDQAENRMHTIKAVMVATLSK.

Carbamoyl phosphate-binding positions include 56 to 59, Q83, R107, and 134 to 137; these read STRT and HPTQ. L-ornithine contacts are provided by residues N168, D232, and 236-237; that span reads SM. Carbamoyl phosphate-binding positions include 274–275 and R320; that span reads CL.

It belongs to the aspartate/ornithine carbamoyltransferase superfamily. OTCase family.

The protein localises to the cytoplasm. It carries out the reaction carbamoyl phosphate + L-ornithine = L-citrulline + phosphate + H(+). It functions in the pathway amino-acid biosynthesis; L-arginine biosynthesis; L-arginine from L-ornithine and carbamoyl phosphate: step 1/3. Functionally, reversibly catalyzes the transfer of the carbamoyl group from carbamoyl phosphate (CP) to the N(epsilon) atom of ornithine (ORN) to produce L-citrulline. This chain is Ornithine carbamoyltransferase, found in Shigella sonnei (strain Ss046).